The primary structure comprises 87 residues: Neurotoxin Cex4 (87 aa).

A signal peptide spans 1-19; the sequence is MNSLLMITACLFLIGTVWA. One can recognise an LCN-type CS-alpha/beta domain in the interval 20–85; the sequence is KEGYLVNKST…TYPLPNKSCG (66 aa). Intrachain disulfides connect C31–C84, C35–C60, C44–C65, and C48–C67. Position 84 is a cysteine amide (C84). A propeptide spanning residues 85 to 87 is cleaved from the precursor; it reads GRK.

The protein belongs to the long (4 C-C) scorpion toxin superfamily. Sodium channel inhibitor family. Beta subfamily. Expressed by the venom gland.

The protein resides in the secreted. Functionally, beta toxins bind voltage-independently at site-4 of sodium channels (Nav) and shift the voltage of activation toward more negative potentials thereby affecting sodium channel activation and promoting spontaneous and repetitive firing. The protein is Neurotoxin Cex4 of Centruroides exilicauda (Bark scorpion).